Reading from the N-terminus, the 120-residue chain is UPF0382 membrane protein SSP2132 (120 aa).

The next 4 membrane-spanning stretches (helical) occupy residues V3–A23, M46–V66, V69–L89, and I94–V114.

The protein belongs to the UPF0382 family.

The protein localises to the cell membrane. This is UPF0382 membrane protein SSP2132 from Staphylococcus saprophyticus subsp. saprophyticus (strain ATCC 15305 / DSM 20229 / NCIMB 8711 / NCTC 7292 / S-41).